We begin with the raw amino-acid sequence, 126 residues long: Large ribosomal subunit protein bL12 (126 aa).

This sequence belongs to the bacterial ribosomal protein bL12 family. Homodimer. Part of the ribosomal stalk of the 50S ribosomal subunit. Forms a multimeric L10(L12)X complex, where L10 forms an elongated spine to which 2 to 4 L12 dimers bind in a sequential fashion. Binds GTP-bound translation factors.

Its function is as follows. Forms part of the ribosomal stalk which helps the ribosome interact with GTP-bound translation factors. Is thus essential for accurate translation. This is Large ribosomal subunit protein bL12 from Beijerinckia indica subsp. indica (strain ATCC 9039 / DSM 1715 / NCIMB 8712).